The chain runs to 236 residues: Biosynthetic peptidoglycan transglycosylase (236 aa).

The helical transmembrane segment at 12 to 31 (ALLWFAAGSIAVVLVLRWVP) threads the bilayer.

The protein belongs to the glycosyltransferase 51 family.

It is found in the cell inner membrane. The catalysed reaction is [GlcNAc-(1-&gt;4)-Mur2Ac(oyl-L-Ala-gamma-D-Glu-L-Lys-D-Ala-D-Ala)](n)-di-trans,octa-cis-undecaprenyl diphosphate + beta-D-GlcNAc-(1-&gt;4)-Mur2Ac(oyl-L-Ala-gamma-D-Glu-L-Lys-D-Ala-D-Ala)-di-trans,octa-cis-undecaprenyl diphosphate = [GlcNAc-(1-&gt;4)-Mur2Ac(oyl-L-Ala-gamma-D-Glu-L-Lys-D-Ala-D-Ala)](n+1)-di-trans,octa-cis-undecaprenyl diphosphate + di-trans,octa-cis-undecaprenyl diphosphate + H(+). It functions in the pathway cell wall biogenesis; peptidoglycan biosynthesis. In terms of biological role, peptidoglycan polymerase that catalyzes glycan chain elongation from lipid-linked precursors. This Pseudomonas entomophila (strain L48) protein is Biosynthetic peptidoglycan transglycosylase.